The following is a 162-amino-acid chain: Small ribosomal subunit protein uS7m (162 aa).

It belongs to the universal ribosomal protein uS7 family. As to quaternary structure, part of the small ribosomal subunit.

It localises to the mitochondrion. One of the primary rRNA binding proteins, it binds directly to 16S-like rRNA where it nucleates assembly of the head domain of the small subunit. The protein is Small ribosomal subunit protein uS7m (mrps7) of Dictyostelium discoideum (Social amoeba).